We begin with the raw amino-acid sequence, 907 residues long: Protein translocase subunit SecA (907 aa).

ATP-binding positions include glutamine 87, 105-109 (GEGKT), and aspartate 512. Residues 870-897 (AALAATQPQVREGEKVGRNDPCPCGSGK) form a disordered region. Zn(2+) contacts are provided by cysteine 891, cysteine 893, cysteine 902, and histidine 903.

Belongs to the SecA family. Monomer and homodimer. Part of the essential Sec protein translocation apparatus which comprises SecA, SecYEG and auxiliary proteins SecDF-YajC and YidC. It depends on Zn(2+) as a cofactor.

Its subcellular location is the cell inner membrane. The protein localises to the cytoplasm. The catalysed reaction is ATP + H2O + cellular proteinSide 1 = ADP + phosphate + cellular proteinSide 2.. Its function is as follows. Part of the Sec protein translocase complex. Interacts with the SecYEG preprotein conducting channel. Has a central role in coupling the hydrolysis of ATP to the transfer of proteins into and across the cell membrane, serving both as a receptor for the preprotein-SecB complex and as an ATP-driven molecular motor driving the stepwise translocation of polypeptide chains across the membrane. The protein is Protein translocase subunit SecA of Shewanella piezotolerans (strain WP3 / JCM 13877).